The chain runs to 106 residues: Protein translation factor SUI1 homolog (106 aa).

This sequence belongs to the SUI1 family.

In terms of biological role, additional factor that functions in concert with eIF-2 and the initiator tRNA in directing the ribosome to the proper start site of translation. The protein is Protein translation factor SUI1 homolog of Acanthamoeba polyphaga mimivirus (APMV).